The chain runs to 1052 residues: Membrane-bound transcription factor site-1 protease (1052 aa).

The first 17 residues, 1 to 17 (MKLVNIWLLLLVVLLCG), serve as a signal peptide directing secretion. Residues 18–186 (KKHLGDRLEK…TGRHSSRRLL (169 aa)) constitute a propeptide that is removed on maturation. Ser168 is modified (phosphoserine; by FAM20C). Topologically, residues 187–998 (RAIPRQVAQT…IMPGRYNQEV (812 aa)) are lumenal. The Peptidase S8 domain occupies 190–472 (PRQVAQTLQA…HGKLDLLRAY (283 aa)). Asp218 serves as the catalytic Charge relay system. Asn236 carries N-linked (GlcNAc...) asparagine glycosylation. Catalysis depends on His249, which acts as the Charge relay system. The N-linked (GlcNAc...) asparagine glycan is linked to Asn305. Catalysis depends on Ser414, which acts as the Charge relay system. N-linked (GlcNAc...) asparagine glycans are attached at residues Asn515 and Asn728. The span at 877 to 887 (PSLSHSGNRQR) shows a compositional bias: polar residues. The disordered stretch occupies residues 877–899 (PSLSHSGNRQRPPSGAGSVTPER). N-linked (GlcNAc...) asparagine glycosylation is present at Asn939. Residues 999–1021 (GQTIPVFAFLGAMVVLAFFVVQI) traverse the membrane as a helical segment. Residues 1022–1052 (NKAKSRPKRRKPRVKRPQLMQQVHPPKTPSV) are Cytoplasmic-facing. Residues 1027-1037 (RPKRRKPRVKR) show a composition bias toward basic residues. The segment at 1027 to 1052 (RPKRRKPRVKRPQLMQQVHPPKTPSV) is disordered.

This sequence belongs to the peptidase S8 family. As to quaternary structure, interacts with LYSET; this interaction bridges GNPTAB to MBTPS1. Requires Ca(2+) as cofactor. Post-translationally, the 148 kDa zymogen is processed progressively into two membrane-bound 120 and 106 kDa forms in the endoplasmic reticulum, and late into a secreted 98 kDa form. The propeptide is autocatalytically removed through an intramolecular cleavage after Leu-186. Further cleavage generates 14, 10, and 8 kDa intermediates. In terms of tissue distribution, widely expressed.

It localises to the endoplasmic reticulum membrane. The protein resides in the golgi apparatus membrane. The catalysed reaction is Processes precursors containing basic and hydrophobic/aliphatic residues at P4 and P2, respectively, with a relatively relaxed acceptance of amino acids at P1 and P3.. Its activity is regulated as follows. Inhibited by divalent copper and zinc ions, but not by nickel or cobalt. Inhibited by its prosegment, but not smaller fragments. Inhibited by 4-(2-aminoethyl)benzenesulfonyl fluoride (AEBSF), a serine protease inhibitor. Its function is as follows. Serine protease that cleaves after hydrophobic or small residues, provided that Arg or Lys is in position P4: known substrates include SREBF1/SREBP1, SREBF2/SREBP2, BDNF, GNPTAB, ATF6, ATF6B and FAM20C. Cleaves substrates after Arg-Ser-Val-Leu (SREBP2), Arg-His-Leu-Leu (ATF6), Arg-Gly-Leu-Thr (BDNF) and its own propeptide after Arg-Arg-Leu-Leu. Catalyzes the first step in the proteolytic activation of the sterol regulatory element-binding proteins (SREBPs) SREBF1/SREBP1 and SREBF2/SREBP2. Also mediates the first step in the proteolytic activation of the cyclic AMP-dependent transcription factor ATF-6 (ATF6 and ATF6B). Mediates the protein cleavage of GNPTAB into subunit alpha and beta, thereby participating in biogenesis of lysosomes. Cleaves the propeptide from FAM20C which is required for FAM20C secretion from the Golgi apparatus membrane and for enhancement of FAM20C kinase activity, promoting osteoblast differentiation and biomineralization. Involved in the regulation of M6P-dependent Golgi-to-lysosome trafficking of lysosomal enzymes. It is required for the activation of CREB3L2/BBF2H7, a transcriptional activator of MIA3/TANGO and other genes controlling mega vesicle formation. Therefore, it plays a key role in the regulation of mega vesicle-mediated collagen trafficking. In astrocytes and osteoblasts, upon DNA damage and ER stress, mediates the first step of the regulated intramembrane proteolytic activation of the transcription factor CREB3L1, leading to the inhibition of cell-cycle progression. The sequence is that of Membrane-bound transcription factor site-1 protease from Homo sapiens (Human).